The following is a 237-amino-acid chain: Large ribosomal subunit protein uL1 (237 aa).

Belongs to the universal ribosomal protein uL1 family. Part of the 50S ribosomal subunit.

Functionally, binds directly to 23S rRNA. The L1 stalk is quite mobile in the ribosome, and is involved in E site tRNA release. Its function is as follows. Protein L1 is also a translational repressor protein, it controls the translation of the L11 operon by binding to its mRNA. This is Large ribosomal subunit protein uL1 from Synechococcus sp. (strain ATCC 27144 / PCC 6301 / SAUG 1402/1) (Anacystis nidulans).